The following is a 328-amino-acid chain: UPF0285 protein Mevan_1551 (328 aa).

Belongs to the UPF0285 family.

In Methanococcus vannielii (strain ATCC 35089 / DSM 1224 / JCM 13029 / OCM 148 / SB), this protein is UPF0285 protein Mevan_1551.